Reading from the N-terminus, the 280-residue chain is Lipase chaperone (280 aa).

The chain crosses the membrane as a helical span at residues 5-22 (ALTIITIASGSLGAVYFL).

The protein belongs to the lipase chaperone family.

It localises to the cell inner membrane. Its function is as follows. May be involved in the folding of the extracellular lipase during its passage through the periplasm. The polypeptide is Lipase chaperone (lifO) (Vibrio vulnificus (strain YJ016)).